A 207-amino-acid polypeptide reads, in one-letter code: Thymidylate kinase (207 aa).

ATP is bound at residue 7 to 14 (GPEGAGKS).

Belongs to the thymidylate kinase family.

It catalyses the reaction dTMP + ATP = dTDP + ADP. Phosphorylation of dTMP to form dTDP in both de novo and salvage pathways of dTTP synthesis. In Pseudomonas putida (strain W619), this protein is Thymidylate kinase.